A 676-amino-acid chain; its full sequence is RNA helicase NPH-II (676 aa).

The Helicase ATP-binding domain occupies 172–347 (FSAWISHRPV…VFLPNPAFIH (176 aa)). ATP is bound at residue 185–192 (GGTGVGKT). The DEXH box signature appears at 296-299 (DEVH). The Helicase C-terminal domain occupies 366–535 (NPSSRMAYIE…NYILYANKFN (170 aa)).

The protein belongs to the DEAD box helicase family. DEAH subfamily. As to quaternary structure, monomer.

The protein localises to the virion. The catalysed reaction is ATP + H2O = ADP + phosphate + H(+). Functionally, NTP-dependent helicase that catalyzes unidirectional unwinding of 3'tailed duplex RNAs and plays an important role during transcription of early mRNAs, presumably by preventing R-loop formation behind the elongating RNA polymerase. Might also play a role in the export of newly synthesized mRNA chains out of the core into the cytoplasm. Required for replication and propagation of viral particles. The protein is RNA helicase NPH-II (OPG084) of Vaccinia virus (strain Ankara) (VACV).